A 252-amino-acid polypeptide reads, in one-letter code: 2-succinyl-6-hydroxy-2,4-cyclohexadiene-1-carboxylate synthase (252 aa).

This sequence belongs to the AB hydrolase superfamily. MenH family. In terms of assembly, monomer.

It catalyses the reaction 5-enolpyruvoyl-6-hydroxy-2-succinyl-cyclohex-3-ene-1-carboxylate = (1R,6R)-6-hydroxy-2-succinyl-cyclohexa-2,4-diene-1-carboxylate + pyruvate. It participates in quinol/quinone metabolism; 1,4-dihydroxy-2-naphthoate biosynthesis; 1,4-dihydroxy-2-naphthoate from chorismate: step 3/7. The protein operates within quinol/quinone metabolism; menaquinone biosynthesis. In terms of biological role, catalyzes a proton abstraction reaction that results in 2,5-elimination of pyruvate from 2-succinyl-5-enolpyruvyl-6-hydroxy-3-cyclohexene-1-carboxylate (SEPHCHC) and the formation of 2-succinyl-6-hydroxy-2,4-cyclohexadiene-1-carboxylate (SHCHC). The chain is 2-succinyl-6-hydroxy-2,4-cyclohexadiene-1-carboxylate synthase from Shigella flexneri serotype 5b (strain 8401).